A 253-amino-acid polypeptide reads, in one-letter code: MLEQSESHAFINNAPKEDRIQVKFEQLFESLPLPLRAEEALSKLRHDSARLMILKTSDPTLNMSTYSIEDSPMGFECLKYNLSDNNKLLSQNNYRLPDYLEEDEIVSYTFSKTGPTTSKNKHPSHSNTIRSPPYKVKKESCHTEINNVSNVSTESINVIDASRGYSPYTSVDSLSVSKNRSFISLEESASNQYDAAEAFYFNADSSSPLRKLSPIELPVTPIRRKTPTINPNSELKRLQTFGKLILHKGSRRR.

The disordered stretch occupies residues Thr113–Val136.

In terms of assembly, component of the CENP-A recruiting complex composed of at least mis16, mis19, mis19 and mis20.

It localises to the cytoplasm. The protein resides in the cytoskeleton. The protein localises to the microtubule organizing center. Its subcellular location is the spindle pole body. It is found in the chromosome. It localises to the centromere. Its function is as follows. Component of the CENP-A recruiting complex that ensures the integrity of mitotic spindles through maintenance of kinetochore factors mis6/CENP-I and cnp1/CENP-A. Seems dispensable for proper chromosome segregation. The protein is CENP-A recruiting complex protein mis20 of Schizosaccharomyces pombe (strain 972 / ATCC 24843) (Fission yeast).